Here is a 247-residue protein sequence, read N- to C-terminus: Chymase (247 aa).

An N-terminal signal peptide occupies residues 1 to 17 (MCLLSLPLLLFLQYTRA). The propeptide at 18 to 21 (KAGE) is activation peptide. A Peptidase S1 domain is found at 22–245 (VIGGTECKPH…YRPWINKILK (224 aa)). Cys-51 and Cys-67 are oxidised to a cystine. His-66 functions as the Charge relay system in the catalytic mechanism. Asn-103 carries an N-linked (GlcNAc...) asparagine glycan. Asp-110 serves as the catalytic Charge relay system. Asn-121 is a glycosylation site (N-linked (GlcNAc...) asparagine). Disulfide bonds link Cys-144–Cys-209 and Cys-175–Cys-188. The active-site Charge relay system is Ser-203.

It belongs to the peptidase S1 family. Granzyme subfamily.

The protein localises to the secreted. Its subcellular location is the cytoplasmic granule. The enzyme catalyses Preferential cleavage: Phe-|-Xaa &gt; Tyr-|-Xaa &gt; Trp-|-Xaa &gt; Leu-|-Xaa.. In terms of biological role, major secreted protease of mast cells with suspected roles in vasoactive peptide generation, extracellular matrix degradation, and regulation of gland secretion. In Cavia porcellus (Guinea pig), this protein is Chymase.